Here is a 146-residue protein sequence, read N- to C-terminus: Hemoglobin subunit beta-1 (146 aa).

The region spanning 2–146 (KWSDKERAVI…VVSALGKQYC (145 aa)) is the Globin domain. Residues H63 and H92 each coordinate heme b.

The protein belongs to the globin family. In terms of assembly, hb1 is a heterotetramer of two alpha-1 chains and two beta-1 chains; Hb2 is a heterotetramer of two alpha-2 chains and two beta-1 chains. As to expression, red blood cells.

Its function is as follows. Involved in oxygen transport from gills to the various peripheral tissues. The protein is Hemoglobin subunit beta-1 (hbb1) of Anarhichas minor (Arctic spotted wolffish).